Here is a 743-residue protein sequence, read N- to C-terminus: 1,4-alpha-glucan branching enzyme GlgB (743 aa).

Aspartate 423 functions as the Nucleophile in the catalytic mechanism. Glutamate 476 (proton donor) is an active-site residue.

This sequence belongs to the glycosyl hydrolase 13 family. GlgB subfamily. As to quaternary structure, monomer.

The enzyme catalyses Transfers a segment of a (1-&gt;4)-alpha-D-glucan chain to a primary hydroxy group in a similar glucan chain.. Its pathway is glycan biosynthesis; glycogen biosynthesis. In terms of biological role, catalyzes the formation of the alpha-1,6-glucosidic linkages in glycogen by scission of a 1,4-alpha-linked oligosaccharide from growing alpha-1,4-glucan chains and the subsequent attachment of the oligosaccharide to the alpha-1,6 position. The polypeptide is 1,4-alpha-glucan branching enzyme GlgB (Pseudomonas fluorescens (strain ATCC BAA-477 / NRRL B-23932 / Pf-5)).